Consider the following 623-residue polypeptide: Glutathione import ATP-binding protein GsiA (623 aa).

ABC transporter domains lie at 15–269 (VSGL…QTLL) and 325–564 (LRSG…RKLM). ATP is bound by residues 49-56 (GESGSGKS) and 357-364 (GESGSGKS).

This sequence belongs to the ABC transporter superfamily. Glutathione importer (TC 3.A.1.5.11) family. As to quaternary structure, the complex is composed of two ATP-binding proteins (GsiA), two transmembrane proteins (GsiC and GsiD) and a solute-binding protein (GsiB).

Its subcellular location is the cell inner membrane. It catalyses the reaction glutathione(out) + ATP + H2O = glutathione(in) + ADP + phosphate + H(+). In terms of biological role, part of the ABC transporter complex GsiABCD involved in glutathione import. Responsible for energy coupling to the transport system. The protein is Glutathione import ATP-binding protein GsiA of Salmonella choleraesuis (strain SC-B67).